The following is a 1112-amino-acid chain: Electrogenic sodium bicarbonate cotransporter 4 (1112 aa).

Residues 1–13 (MKVEEKAGVKKLE) show a composition bias toward basic and acidic residues. Disordered regions lie at residues 1–80 (MKVE…SSLG), 220–255 (KKPI…HHST), and 439–469 (GRSG…NEAE). Over 1–513 (MKVEEKAGVK…DFYDGFHIQS (513 aa)) the chain is Cytoplasmic. Polar residues-rich tracts occupy residues 53–67 (QRVQ…SQQD) and 233–244 (SVSTTNRSSARS). Over residues 444 to 465 (SAGGGGSGGGAGGSGAGGGGSG) the composition is skewed to gly residues. Residues 514 to 536 (ISAVLFIYLGCITNAITFGGLLG) traverse the membrane as a helical segment. The Extracellular portion of the chain corresponds to 537–547 (DATDNYQGVME). Residues 548 to 579 (SFLGTAMAGSLFCLFSGQPLIILSSTGPILIF) traverse the membrane as a helical segment. The Cytoplasmic segment spans residues 580-598 (EKLLFDFSKANGLDYMEFR). A helical membrane pass occupies residues 599 to 620 (LWIGLHSAIQCLILVATDASFI). At 621–734 (IKYITRFTEE…LGSSCQFVPD (114 aa)) the chain is on the extracellular side. The helical transmembrane segment at 735–753 (LALMSFILFFGTYSMTLTL) threads the bilayer. At 754 to 772 (KKFKFSRYFPTKVRTLVAD) the chain is on the cytoplasmic side. A helical membrane pass occupies residues 773 to 792 (FSIVFSILLFCGIDACFGLQ). Residues 793-820 (TPKLHVPNVIKPTRPDRGWFVAPFGKNP) lie on the Extracellular side of the membrane. Residues 821–839 (WWVYPASILPALLVTILIF) form a helical membrane-spanning segment. Topologically, residues 840 to 858 (MDQQITAVIVNRKENKLRK) are cytoplasmic. The helical transmembrane segment at 859–875 (AAGYHLDLFWVGILMAL) threads the bilayer. At 876-880 (CSFMG) the chain is on the extracellular side. Residues 881 to 900 (LPWYVAATVISIAHIDSLKM) traverse the membrane as a helical segment. Topologically, residues 901–920 (ETETSAPGEQPQFLGVREQR) are cytoplasmic. Residues 921 to 940 (VTGVMVFILTGISVFLAPIL) traverse the membrane as a helical segment. Over 941-945 (KYIPM) the chain is Extracellular. A helical membrane pass occupies residues 946-966 (PVLYGVFLYMGVASLNGIQFW). Over 967–992 (DRCKLFLMPAKHQPDHAFLRHVPLRR) the chain is Cytoplasmic. A helical membrane pass occupies residues 993–1010 (IHLFTLVQILCLALLWIL). Over 1011-1015 (KSTMA) the chain is Extracellular. Residues 1016–1033 (AIIFPVMILGLIIVRRLL) form a helical membrane-spanning segment. Residues 1034–1112 (DLIFSQHDLA…KRSSSWSHSL (79 aa)) are Cytoplasmic-facing. Residues 1055–1074 (KESDRKKRRKEVHENTDKEP) are compositionally biased toward basic and acidic residues. Positions 1055 to 1112 (KESDRKKRRKEVHENTDKEPQFLPPSVVKIPMEGIPSDPQNGIHCVGRKRSSSWSHSL) are disordered.

Belongs to the anion exchanger (TC 2.A.31) family. In terms of tissue distribution, observed in hepatocytes and in the apical region of bile duct intrahepatic cholangiocytes of liver. Also observed in uroepithelium cells lining the outer pelvic wall of the kidney (at protein level). Highly expressed in colon, distal colon, liver, kidney and testis. Moderate expression in duodenum and stomach and weak expression in heart. In kidney, very weakly expressed in the inner medulla, but abundantly expressed in cortex and outer medulla in the medullary thick ascending and cortical thick ascending limbs of the loop of Henle.

The protein resides in the basolateral cell membrane. Its subcellular location is the apical cell membrane. It carries out the reaction 2 hydrogencarbonate(out) + Na(+)(out) = 2 hydrogencarbonate(in) + Na(+)(in). It catalyses the reaction 3 hydrogencarbonate(out) + Na(+)(out) = 3 hydrogencarbonate(in) + Na(+)(in). In terms of biological role, mediates sodium- and bicarbonate-dependent electrogenic sodium bicarbonate cotransport, with a Na(+):HCO3(-) stoichiometry varying from 1:2 to 1:3. The sequence is that of Electrogenic sodium bicarbonate cotransporter 4 from Rattus norvegicus (Rat).